The chain runs to 309 residues: Ribonuclease Z (309 aa).

The Zn(2+) site is built by histidine 63, histidine 65, aspartate 67, histidine 68, histidine 141, aspartate 208, and histidine 266. Aspartate 67 functions as the Proton acceptor in the catalytic mechanism.

This sequence belongs to the RNase Z family. As to quaternary structure, homodimer. Zn(2+) is required as a cofactor.

The catalysed reaction is Endonucleolytic cleavage of RNA, removing extra 3' nucleotides from tRNA precursor, generating 3' termini of tRNAs. A 3'-hydroxy group is left at the tRNA terminus and a 5'-phosphoryl group is left at the trailer molecule.. In terms of biological role, zinc phosphodiesterase, which displays some tRNA 3'-processing endonuclease activity. Probably involved in tRNA maturation, by removing a 3'-trailer from precursor tRNA. This is Ribonuclease Z from Salinispora arenicola (strain CNS-205).